A 426-amino-acid polypeptide reads, in one-letter code: Enolase (426 aa).

Gln-163 contacts (2R)-2-phosphoglycerate. Glu-205 acts as the Proton donor in catalysis. Positions 242, 286, and 313 each coordinate Mg(2+). (2R)-2-phosphoglycerate contacts are provided by Lys-338, Arg-367, Ser-368, and Lys-389. Lys-338 acts as the Proton acceptor in catalysis.

This sequence belongs to the enolase family. Mg(2+) is required as a cofactor.

The protein resides in the cytoplasm. The protein localises to the secreted. It is found in the cell surface. It catalyses the reaction (2R)-2-phosphoglycerate = phosphoenolpyruvate + H2O. Its pathway is carbohydrate degradation; glycolysis; pyruvate from D-glyceraldehyde 3-phosphate: step 4/5. Functionally, catalyzes the reversible conversion of 2-phosphoglycerate (2-PG) into phosphoenolpyruvate (PEP). It is essential for the degradation of carbohydrates via glycolysis. This Gemmatimonas aurantiaca (strain DSM 14586 / JCM 11422 / NBRC 100505 / T-27) protein is Enolase.